The sequence spans 73 residues: uncharacterized protein (73 aa).

Residues 8–63 (MLTRIKSVYMFIQEKGLVTTQELVDEFGITPRTIQRDLNVLAYNDLVHSPSRGKWE) form the HTH deoR-type domain. Positions 25-44 (VTTQELVDEFGITPRTIQRD) form a DNA-binding region, H-T-H motif.

This is an uncharacterized protein from Bacillus subtilis (strain 168).